A 1238-amino-acid polypeptide reads, in one-letter code: Virulence sensor protein BvgS (1238 aa).

An N-terminal signal peptide occupies residues 1–32 (MPAPHRLYPRSLICLAQALLVWALLAWAPAQA). The Cytoplasmic portion of the chain corresponds to 33 to 307 (SQELTLVGKA…REQQWMANHP (275 aa)). The helical transmembrane segment at 308-331 (VVKVAVLNLFAPFTLFRTDEQFGG) threads the bilayer. At 332–541 (ISAAVLQLLQ…PRTWYAYRNE (210 aa)) the chain is on the periplasmic side. A helical membrane pass occupies residues 542 to 563 (IYLLIGLGLLSALLFLSWIVYL). Topologically, residues 564–1238 (RRQIRQRKRA…LEQRPHQGQP (675 aa)) are cytoplasmic. The 72-residue stretch at 580 to 651 (QLEFMRVLID…MHEFLLTRMA (72 aa)) folds into the PAS domain. In terms of domain architecture, PAC spans 652 to 708 (AEREPRFEDRDVTLHGRTRHVYQWTVPYGDSLGELKGIIGGWIDITERAELLRELHD). The 223-residue stretch at 726-948 (TMSHEIRTPM…TVSVDLRLTM (223 aa)) folds into the Histidine kinase domain. Residue His-729 is modified to Phosphohistidine; by autocatalysis. The Response regulatory domain occupies 974–1095 (RVLVVDDHKP…ALRQRLNEAA (122 aa)). 4-aspartylphosphate is present on Asp-1023. In terms of domain architecture, HPt spans 1133-1228 (DEALIRQLLE…AALETQLRAW (96 aa)). His-1172 bears the Phosphohistidine mark.

In terms of processing, activation requires a sequential transfer of a phosphate group from a His in the primary transmitter domain, to an Asp in the receiver domain and to a His in the secondary transmitter domain.

Its subcellular location is the cell inner membrane. It carries out the reaction ATP + protein L-histidine = ADP + protein N-phospho-L-histidine.. Its function is as follows. Member of the two-component regulatory system BvgS/BvgA. Phosphorylates BvgA via a four-step phosphorelay in response to environmental signals. The polypeptide is Virulence sensor protein BvgS (bvgS) (Bordetella parapertussis (strain 12822 / ATCC BAA-587 / NCTC 13253)).